The sequence spans 542 residues: Chaperonin GroEL (542 aa).

Residues 29–32 (TMGP), Lys-50, 86–90 (DGTTT), Gly-414, 477–479 (NAA), and Asp-493 contribute to the ATP site.

Belongs to the chaperonin (HSP60) family. In terms of assembly, forms a cylinder of 14 subunits composed of two heptameric rings stacked back-to-back. Interacts with the co-chaperonin GroES.

The protein localises to the cytoplasm. The enzyme catalyses ATP + H2O + a folded polypeptide = ADP + phosphate + an unfolded polypeptide.. In terms of biological role, together with its co-chaperonin GroES, plays an essential role in assisting protein folding. The GroEL-GroES system forms a nano-cage that allows encapsulation of the non-native substrate proteins and provides a physical environment optimized to promote and accelerate protein folding. This chain is Chaperonin GroEL, found in Sulfurovum sp. (strain NBC37-1).